We begin with the raw amino-acid sequence, 193 residues long: Ion-translocating oxidoreductase complex subunit A (193 aa).

The next 6 helical transmembrane spans lie at 5–25, 47–67, 72–92, 102–122, 134–154, and 171–191; these read LLLF…FLGL, FVIT…LLPL, LRTM…EMVV, LLGI…VPLL, AIYG…FAGV, and SIAL…AGLV.

The protein belongs to the NqrDE/RnfAE family. As to quaternary structure, the complex is composed of six subunits: RnfA, RnfB, RnfC, RnfD, RnfE and RnfG.

Its subcellular location is the cell inner membrane. Its function is as follows. Part of a membrane-bound complex that couples electron transfer with translocation of ions across the membrane. In Erwinia tasmaniensis (strain DSM 17950 / CFBP 7177 / CIP 109463 / NCPPB 4357 / Et1/99), this protein is Ion-translocating oxidoreductase complex subunit A.